The sequence spans 575 residues: FAD-dependent monooxygenase rstn6 (575 aa).

The N-terminal stretch at 1 to 17 is a signal peptide; the sequence is MYDVIVIGAGWCGLVAA. Ile-106 serves as a coordination point for FAD. N-linked (GlcNAc...) asparagine glycans are attached at residues Asn-239 and Asn-295.

This sequence belongs to the FAD-binding monooxygenase family. It depends on FAD as a cofactor.

Its pathway is antifungal biosynthesis. Functionally, FAD-dependent monooxygenase; part of the gene cluster that mediates the biosynthesis of the tetrahydropyranyl antifungal agent restricticin that acts as an inhibitor of CYP51 and blocks the ergosterol biosynthesis. The highly reducing polyketide synthase rstn3, the short chain dehydrogenase rstn4, the cyclase rstn5, the FAD-dependent monooxygenase rstn6 and the enoylreductase rstn7 are required to generate the first stable intermediate desmethylrestrictinol. Rstn3 with rstn7 biosynthesize the first polyketide chain intermediate that is reduced by rstn4, followed by epoxidation by rstn6 before 6-endo cyclization via epoxide opening by rstn5 leads to desmethylrestrictinol. The methyltransferase rstn1 then catalyzes the C4 O-methylation of desmethylrestrictinol to produce restrictinol, and the nonribosomal peptide synthetase rstn8 catalyzes the C3 esterification of restrictinol with glycine that leads to restricticin. The polypeptide is FAD-dependent monooxygenase rstn6 (Aspergillus nomiae NRRL (strain ATCC 15546 / NRRL 13137 / CBS 260.88 / M93)).